Reading from the N-terminus, the 229-residue chain is Mannose-specific lectin TAR1 (229 aa).

The signal sequence occupies residues 1–23 (MAKLLLFLLPAILGLLIPRSAVA). Bulb-type lectin domains are found at residues 26-131 (TNYL…PWVP) and 145-229 (DNLL…DYVL). Beta-D-mannose-binding positions include 51-55 (QNDCN), Tyr-59, Trp-63, Gln-64, 170-174 (QGDCN), Tyr-178, and 182-185 (YGWQ). Positions 51–59 (QNDCNLVLY) match the Carbohydrate-binding motif 1 motif. Cystine bridges form between Cys-54–Cys-74 and Cys-173–Cys-195. The Carbohydrate-binding motif 2 signature appears at 170–178 (QGDCNLVLY).

Forms heterotetramer of 2 chains 1 and 2 chains 2 arranged as a dimer of chain 1 and chain 2 heterodimers.

The protein resides in the secreted. Its function is as follows. Mannose-specific lectin. Shows agglutinating activity towards erythrocytes from rabbit. In Colocasia esculenta (Wild taro), this protein is Mannose-specific lectin TAR1.